The chain runs to 164 residues: NADPH-dependent 7-cyano-7-deazaguanine reductase (164 aa).

Residue C55 is the Thioimide intermediate of the active site. The active-site Proton donor is D62. Residues 77-79 (VES) and 96-97 (HE) each bind substrate.

It belongs to the GTP cyclohydrolase I family. QueF type 1 subfamily.

The protein localises to the cytoplasm. The catalysed reaction is 7-aminomethyl-7-carbaguanine + 2 NADP(+) = 7-cyano-7-deazaguanine + 2 NADPH + 3 H(+). It functions in the pathway tRNA modification; tRNA-queuosine biosynthesis. Functionally, catalyzes the NADPH-dependent reduction of 7-cyano-7-deazaguanine (preQ0) to 7-aminomethyl-7-deazaguanine (preQ1). This Bacillus velezensis (strain DSM 23117 / BGSC 10A6 / LMG 26770 / FZB42) (Bacillus amyloliquefaciens subsp. plantarum) protein is NADPH-dependent 7-cyano-7-deazaguanine reductase.